Reading from the N-terminus, the 140-residue chain is Protein KRTCAP2 homolog (140 aa).

The next 4 helical transmembrane spans lie at 11 to 31 (LLSSIISGILSLVIFATLRFC), 40 to 60 (LNVLVGGYLFSWLFILSLTCV), 74 to 94 (AKLVPEILFCLSLTVAAAGIV), and 98 to 118 (CATTSVLFSLVGLYFLNRISI).

Belongs to the KRTCAP2 family. In terms of assembly, component of the oligosaccharyltransferase (OST) complex.

The protein localises to the membrane. Subunit of the oligosaccharyl transferase (OST) complex that catalyzes the initial transfer of a defined glycan (Glc(3)Man(9)GlcNAc(2) in eukaryotes) from the lipid carrier dolichol-pyrophosphate to an asparagine residue within an Asn-X-Ser/Thr consensus motif in nascent polypeptide chains, the first step in protein N-glycosylation. N-glycosylation occurs cotranslationally and the complex associates with the Sec61 complex at the channel-forming translocon complex that mediates protein translocation across the endoplasmic reticulum (ER). All subunits are required for a maximal enzyme activity. The sequence is that of Protein KRTCAP2 homolog from Drosophila pseudoobscura pseudoobscura (Fruit fly).